Here is a 353-residue protein sequence, read N- to C-terminus: Photosystem II D2 protein (353 aa).

Threonine 2 bears the N-acetylthreonine mark. Threonine 2 is subject to Phosphothreonine. Residues 41 to 61 (CAYFAVGGWFTGTTFVTSWYT) traverse the membrane as a helical segment. Residue histidine 118 participates in chlorophyll a binding. A helical membrane pass occupies residues 125 to 141 (GFMLRQFELARSVQLRP). Residues glutamine 130 and asparagine 143 each coordinate pheophytin a. A helical transmembrane segment spans residues 153–166 (VFVSVFLIYPLGQS). Histidine 198 is a binding site for chlorophyll a. The helical transmembrane segment at 208–228 (AALLCAIHGATVENTLFEDGD) threads the bilayer. Residues histidine 215 and phenylalanine 262 each coordinate a plastoquinone. A Fe cation-binding site is contributed by histidine 215. Histidine 269 lines the Fe cation pocket. A helical transmembrane segment spans residues 279 to 295 (GLWMSALGVVGLALNLR).

The protein belongs to the reaction center PufL/M/PsbA/D family. As to quaternary structure, PSII is composed of 1 copy each of membrane proteins PsbA, PsbB, PsbC, PsbD, PsbE, PsbF, PsbH, PsbI, PsbJ, PsbK, PsbL, PsbM, PsbT, PsbX, PsbY, PsbZ, Psb30/Ycf12, at least 3 peripheral proteins of the oxygen-evolving complex and a large number of cofactors. It forms dimeric complexes. The D1/D2 heterodimer binds P680, chlorophylls that are the primary electron donor of PSII, and subsequent electron acceptors. It shares a non-heme iron and each subunit binds pheophytin, quinone, additional chlorophylls, carotenoids and lipids. There is also a Cl(-1) ion associated with D1 and D2, which is required for oxygen evolution. The PSII complex binds additional chlorophylls, carotenoids and specific lipids. serves as cofactor.

The protein localises to the plastid. The protein resides in the chloroplast thylakoid membrane. The catalysed reaction is 2 a plastoquinone + 4 hnu + 2 H2O = 2 a plastoquinol + O2. In terms of biological role, photosystem II (PSII) is a light-driven water:plastoquinone oxidoreductase that uses light energy to abstract electrons from H(2)O, generating O(2) and a proton gradient subsequently used for ATP formation. It consists of a core antenna complex that captures photons, and an electron transfer chain that converts photonic excitation into a charge separation. The D1/D2 (PsbA/PsbD) reaction center heterodimer binds P680, the primary electron donor of PSII as well as several subsequent electron acceptors. D2 is needed for assembly of a stable PSII complex. In Solanum bulbocastanum (Wild potato), this protein is Photosystem II D2 protein.